Reading from the N-terminus, the 499-residue chain is ATP synthase subunit beta, chloroplastic (499 aa).

170-177 contributes to the ATP binding site; sequence GGAGVGKT.

It belongs to the ATPase alpha/beta chains family. F-type ATPases have 2 components, CF(1) - the catalytic core - and CF(0) - the membrane proton channel. CF(1) has five subunits: alpha(3), beta(3), gamma(1), delta(1), epsilon(1). CF(0) has four main subunits: a(1), b(1), b'(1) and c(9-12).

It localises to the plastid. It is found in the chloroplast thylakoid membrane. It carries out the reaction ATP + H2O + 4 H(+)(in) = ADP + phosphate + 5 H(+)(out). Its function is as follows. Produces ATP from ADP in the presence of a proton gradient across the membrane. The catalytic sites are hosted primarily by the beta subunits. This is ATP synthase subunit beta, chloroplastic from Ipomoea purpurea (Common morning glory).